Reading from the N-terminus, the 103-residue chain is N(4)-acetylcytidine amidohydrolase (103 aa).

An ASCH domain is found at 6 to 101; it reads ITFFQRFQDD…QTQFYVIEFK (96 aa). Lysine 21 (proton acceptor) is an active-site residue. Catalysis depends on threonine 24, which acts as the Nucleophile. Glutamate 74 functions as the Proton donor in the catalytic mechanism.

It belongs to the N(4)-acetylcytidine amidohydrolase family.

It carries out the reaction N(4)-acetylcytidine + H2O = cytidine + acetate + H(+). It catalyses the reaction N(4)-acetyl-2'-deoxycytidine + H2O = 2'-deoxycytidine + acetate + H(+). The enzyme catalyses N(4)-acetylcytosine + H2O = cytosine + acetate + H(+). Catalyzes the hydrolysis of N(4)-acetylcytidine (ac4C). The chain is N(4)-acetylcytidine amidohydrolase (yqfB) from Escherichia coli O127:H6 (strain E2348/69 / EPEC).